The sequence spans 506 residues: Maturase K (506 aa).

The protein belongs to the intron maturase 2 family. MatK subfamily.

It is found in the plastid. The protein localises to the chloroplast. In terms of biological role, usually encoded in the trnK tRNA gene intron. Probably assists in splicing its own and other chloroplast group II introns. The sequence is that of Maturase K from Hydrangea macrophylla (Bigleaf hydrangea).